We begin with the raw amino-acid sequence, 81 residues long: Putative membrane protein insertion efficiency factor (81 aa).

A disordered region spans residues 59-81 (PWNPGGYDPVPPIKTSRSSSMAE).

The protein belongs to the UPF0161 family.

It localises to the cell inner membrane. Its function is as follows. Could be involved in insertion of integral membrane proteins into the membrane. The protein is Putative membrane protein insertion efficiency factor of Azotobacter vinelandii (strain DJ / ATCC BAA-1303).